The sequence spans 170 residues: Viral interleukin-10 homolog (170 aa).

An N-terminal signal peptide occupies residues 1–23 (MERRLVVTLQCLVLLYLAPECGG). Disulfide bonds link C27–C119 and C73–C125. Residues 97-145 (EAKDHVNSLGENLKTLRLRLRRCHRFLPCENKSKAVEQIKNAFNKLQEK) are a coiled coil. The N-linked (GlcNAc...) asparagine; by host glycan is linked to N127.

The protein belongs to the IL-10 family. As to quaternary structure, homodimer.

It localises to the secreted. Inhibits IFN-gamma synthesis. Down-regulates the expression of the host TAP1 gene (transporter associated with antigen processing), thereby affecting the transport of peptides into the endoplasmic reticulum and subsequent peptide loading by MHC class I molecules. In consequence, infected cells are masked for immune recognition by cytotoxic T-lymphocytes. In Epstein-Barr virus (strain AG876) (HHV-4), this protein is Viral interleukin-10 homolog.